The chain runs to 249 residues: Proteasome subunit alpha type-7 (249 aa).

The protein belongs to the peptidase T1A family. As to quaternary structure, the 26S proteasome consists of a 20S proteasome core and two 19S regulatory subunits. The 20S proteasome core is composed of 28 subunits that are arranged in four stacked rings, resulting in a barrel-shaped structure. The two end rings are each formed by seven alpha subunits, and the two central rings are each formed by seven beta subunits. The catalytic chamber with the active sites is on the inside of the barrel.

Its subcellular location is the cytoplasm. It is found in the nucleus. Functionally, the proteasome is a multicatalytic proteinase complex which is characterized by its ability to cleave peptides with Arg, Phe, Tyr, Leu, and Glu adjacent to the leaving group at neutral or slightly basic pH. The proteasome has an ATP-dependent proteolytic activity. The polypeptide is Proteasome subunit alpha type-7 (PAD1) (Cicer arietinum (Chickpea)).